A 156-amino-acid chain; its full sequence is Ribosome maturation factor RimP (156 aa).

It belongs to the RimP family.

It is found in the cytoplasm. Required for maturation of 30S ribosomal subunits. The protein is Ribosome maturation factor RimP of Gloeobacter violaceus (strain ATCC 29082 / PCC 7421).